Consider the following 231-residue polypeptide: Acyltransferase PGAP2 (231 aa).

At 1 to 22 (MQQVPYGSVDRDKPLIRVPFTR) the chain is on the cytoplasmic side. Residues 23-43 (LAVITVCLPLLGLVACIVLAM) traverse the membrane as a helical segment. Over 44–78 (LYHYNDATYTHCQVPNYLPSISAAISLTPERYIWR) the chain is Lumenal. Residues 79 to 99 (FSIGLHSAPRFLVAAAYLSFY) traverse the membrane as a helical segment. Residues 100-110 (RGRFSRRLTEQ) are Cytoplasmic-facing. A helical transmembrane segment spans residues 111–131 (LLSGFTFLLALSENVGLLLLT). Over 132-146 (YVSSTETYSVHKSGF) the chain is Lumenal. Residues 147–167 (ILFIGSSLFHMLCTCKLWSLI) form a helical membrane-spanning segment. Topologically, residues 168–179 (VKYSISSEEMMS) are cytoplasmic. Residues 180–200 (YWFKLRLFLFNGGCCVLAVYF) form a helical membrane-spanning segment. Residues 201–231 (YRRHNTYCEEGITHASRCVSIWWCCPTWPST) are Lumenal-facing.

Belongs to the PGAP2 family.

It is found in the golgi apparatus membrane. In terms of biological role, involved in the fatty acid remodeling steps of GPI-anchor maturation where the unsaturated acyl chain at sn-2 of inositol phosphate is replaced by a saturated stearoyl chain. May catalyze the second step of the fatty acid remodeling, by reacylating a lyso-GPI intermediate at sn-2 of inositol phosphate by a saturated chain. The fatty acid remodeling steps is critical for the integration of GPI-APs into lipid rafts. This Danio rerio (Zebrafish) protein is Acyltransferase PGAP2.